Reading from the N-terminus, the 302-residue chain is Glycine--tRNA ligase alpha subunit (302 aa).

It belongs to the class-II aminoacyl-tRNA synthetase family. In terms of assembly, tetramer of two alpha and two beta subunits.

Its subcellular location is the cytoplasm. It catalyses the reaction tRNA(Gly) + glycine + ATP = glycyl-tRNA(Gly) + AMP + diphosphate. The sequence is that of Glycine--tRNA ligase alpha subunit from Haemophilus ducreyi (strain 35000HP / ATCC 700724).